The following is a 143-amino-acid chain: Beta/delta-urticatoxin-Uf2b (143 aa).

Positions Met1 to Ala18 are cleaved as a signal peptide. Residues Phe19–Asn80 constitute a propeptide that is removed on maturation. Disulfide bonds link Cys83–Cys100, Cys90–Cys105, Cys99–Cys113, Cys115–Cys129, Cys122–Cys134, and Cys128–Cys142.

It belongs to the urticatoxin-2 family. As to expression, expressed in trichomes, that are stiff epidermal hairs located on the surface of petioles and leaves.

The protein resides in the secreted. In terms of biological role, plant defense neurotoxin that causes pain and systemic symptoms in mammals via modulation of voltage-gated sodium channels (Nav). Potent modulator of human Nav1.5/SCN5A (EC(50)=55 nM), Nav1.6/SCN8A (EC(50)=0.86 nM), and Nav1.7/SCN9A (EC(50)=208 nM), where it shifts the activation threshold to more negative potentials and delays fast inactivation. Also shifts the voltage-dependence of steady-state fast inactivation of Nav1.6/SCN8A, but not that of Nav1.5/SCN5A or Nav1.7/SCN9A. On Nav1.7/SCN9A, principally acts by binding to extracellular loops of domain IV (Nav site 3). In vivo, intraplantar injection into mice causes numerous dose-dependent, immediate, and long-lasting spontaneous pain behaviors, while no swelling is observed in the injected paw. At the highest doses tested, systemic symptoms including hypokinesia and hypersalivation are observed. This chain is Beta/delta-urticatoxin-Uf2b, found in Urtica ferox (Tree nettle).